The chain runs to 277 residues: Outer kinetochore KNL1 complex subunit ZWINT (277 aa).

Positions 80–155 are interaction with NDC80 and ZW10; sequence ASEDTSRQKA…MEKRRAVQNQ (76 aa). Residues 104–217 are a coiled coil; sequence REHVEAIKIG…RYQTFLQLLY (114 aa). The disordered stretch occupies residues 228-277; that stretch reads AEAEAENLPDDKPQQPTRPQEQSTGDTMGRDPGVSFKAVGLQPAGDVNLP. A compositionally biased stretch (polar residues) spans 241–253; that stretch reads QQPTRPQEQSTGD.

Component of the KNL1 complex composed of KNL1 and ZWINT. Part of the ten-subunit outer kinetochore KMN network that includes the KNL1, MIS12 and NDC80 complexes; a bioriented kinetochore contains approximately 150 copies of the network. Interacts with the MIS12 complex subunits MIS12 DSN1, and PMF1. Interacts with the NDC80 complex subunit NDC80 during mitosis. Interacts with ZW10. Interacts with CETN3.

The protein resides in the nucleus. It localises to the chromosome. The protein localises to the centromere. It is found in the kinetochore. Functionally, acts as a component of the outer kinetochore KNL1 complex that serves as a docking point for spindle assembly checkpoint components and mediates microtubule-kinetochore interactions. Kinetochores, consisting of a centromere-associated inner segment and a microtubule-contacting outer segment, play a crucial role in chromosome segregation by mediating the physical connection between centromeric DNA and spindle microtubules. The outer kinetochore is made up of the ten-subunit KMN network, comprising the MIS12, NDC80 and KNL1 complexes, and auxiliary microtubule-associated components; together they connect the outer kinetochore with the inner kinetochore, bind microtubules, and mediate interactions with mitotic checkpoint proteins that delay anaphase until chromosomes are bioriented on the spindle. Targets the RZZ complex to the kinetochore at prometaphase. Recruits MAD2L1 to the kinetochore, but is not required for BUB1B localization. In addition to orienting mitotic chromosomes, it is also essential for alignment of homologous chromosomes during meiotic metaphase I. In meiosis I, required to activate the spindle assembly checkpoint at unattached kinetochores to correct erroneous kinetochore-microtubule attachments. This Homo sapiens (Human) protein is Outer kinetochore KNL1 complex subunit ZWINT (ZWINT).